Consider the following 100-residue polypeptide: Small ribosomal subunit protein uS14c (100 aa).

A disordered region spans residues 1-31 (MARKSLIQREKKRQKLEQKYHSIRRSSKKEI).

Belongs to the universal ribosomal protein uS14 family. As to quaternary structure, part of the 30S ribosomal subunit.

The protein resides in the plastid. Its subcellular location is the chloroplast. In terms of biological role, binds 16S rRNA, required for the assembly of 30S particles. This Solanum bulbocastanum (Wild potato) protein is Small ribosomal subunit protein uS14c.